We begin with the raw amino-acid sequence, 368 residues long: MTTPTQKLSDAGVSIWLDDLSRQRLTSGNLQKLIDTENVVGVTTNPTIFAAALADGESYREQVAELAAADTSVDDAVFRITTDDVRDACDLFAPIAEATQGVDGRVSIEVDPRLAQDADATSAMAQKLSQTIDRPNALIKIPATEKGLPSIAATVAEGISVNVTLIFSLERYRGVINAYMEGLERALENGKDLSTIHSVASFFVSRVDTEIDKRLDAVGSSEATALKGKAGLANARLAYQVYEQSLDTERWKRLAAAGANPQRPLWASTGVKDPSLPDTLYVTELVAPNTVNTMPEKTLDATFDHAEVTGDTVTGTYEQSAEVLDAIAEQGVSYQEVVAQLETEGLQKFDASWEELLSTVRAALDAAR.

Residue lysine 140 is the Schiff-base intermediate with substrate of the active site.

The protein belongs to the transaldolase family. Type 2 subfamily.

It localises to the cytoplasm. It catalyses the reaction D-sedoheptulose 7-phosphate + D-glyceraldehyde 3-phosphate = D-erythrose 4-phosphate + beta-D-fructose 6-phosphate. It functions in the pathway carbohydrate degradation; pentose phosphate pathway; D-glyceraldehyde 3-phosphate and beta-D-fructose 6-phosphate from D-ribose 5-phosphate and D-xylulose 5-phosphate (non-oxidative stage): step 2/3. In terms of biological role, transaldolase is important for the balance of metabolites in the pentose-phosphate pathway. The chain is Transaldolase from Kocuria rhizophila (strain ATCC 9341 / DSM 348 / NBRC 103217 / DC2201).